Reading from the N-terminus, the 222-residue chain is Phosphoribosylformylglycinamidine synthase subunit PurQ (222 aa).

Positions 2-222 (RTAVIQFPGS…FESLKGALVQ (221 aa)) constitute a Glutamine amidotransferase type-1 domain. The active-site Nucleophile is C87. Active-site residues include H195 and E197.

In terms of assembly, part of the FGAM synthase complex composed of 1 PurL, 1 PurQ and 2 PurS subunits.

The protein localises to the cytoplasm. The catalysed reaction is N(2)-formyl-N(1)-(5-phospho-beta-D-ribosyl)glycinamide + L-glutamine + ATP + H2O = 2-formamido-N(1)-(5-O-phospho-beta-D-ribosyl)acetamidine + L-glutamate + ADP + phosphate + H(+). It carries out the reaction L-glutamine + H2O = L-glutamate + NH4(+). Its pathway is purine metabolism; IMP biosynthesis via de novo pathway; 5-amino-1-(5-phospho-D-ribosyl)imidazole from N(2)-formyl-N(1)-(5-phospho-D-ribosyl)glycinamide: step 1/2. Its function is as follows. Part of the phosphoribosylformylglycinamidine synthase complex involved in the purines biosynthetic pathway. Catalyzes the ATP-dependent conversion of formylglycinamide ribonucleotide (FGAR) and glutamine to yield formylglycinamidine ribonucleotide (FGAM) and glutamate. The FGAM synthase complex is composed of three subunits. PurQ produces an ammonia molecule by converting glutamine to glutamate. PurL transfers the ammonia molecule to FGAR to form FGAM in an ATP-dependent manner. PurS interacts with PurQ and PurL and is thought to assist in the transfer of the ammonia molecule from PurQ to PurL. This is Phosphoribosylformylglycinamidine synthase subunit PurQ from Deinococcus geothermalis (strain DSM 11300 / CIP 105573 / AG-3a).